A 435-amino-acid chain; its full sequence is Xylose isomerase (435 aa).

Active-site residues include H99 and D102. 7 residues coordinate Mg(2+): E230, E266, H269, D294, D305, D307, and D337.

This sequence belongs to the xylose isomerase family. In terms of assembly, homotetramer. Mg(2+) serves as cofactor.

The protein localises to the cytoplasm. The catalysed reaction is alpha-D-xylose = alpha-D-xylulofuranose. The sequence is that of Xylose isomerase from Listeria welshimeri serovar 6b (strain ATCC 35897 / DSM 20650 / CCUG 15529 / CIP 8149 / NCTC 11857 / SLCC 5334 / V8).